The primary structure comprises 220 residues: Serine protease-like protein 51 (220 aa).

A signal peptide spans 1 to 16; the sequence is MFQLLIPLLLALKGHA. One can recognise a Peptidase S1 domain in the interval 23 to 220; that stretch reads VQCGHRPAFP…SSKWVSSVGA (198 aa). A glycan (N-linked (GlcNAc...) asparagine) is linked at Asn33. Cysteines 64 and 80 form a disulfide. N-linked (GlcNAc...) asparagine glycosylation occurs at Asn92. A disulfide bridge links Cys157 with Cys170.

This sequence belongs to the peptidase S1 family.

The protein localises to the secreted. The protein is Serine protease-like protein 51 of Homo sapiens (Human).